We begin with the raw amino-acid sequence, 430 residues long: MQASIESTGNLERRLTFTLPQERLETHVGGRLRELARTTRIKGFRPGKVPTKVIEQRFGQQVRAEAMEGLLRETFDSAVREHSLRLAGNPRIDQGETDFDFVATFEVVPDFGDIDVTTLSVVRATAEVTDADIDQMIENLRLQRRIWNPVERGAQAGDLVALETWSQAGDERLPADGVETGSSVLGSGVMFDQIEKGLEGLTKGEEKTLSVDFPAEWRVPQLAGKTVQVHVKAVEVSEPVLPAVDKEFIKSFGVKSGDAEQFRADIRTNLERELKGALMNRLRREVGEQLIAAYAHVEMPPRLVENEARSMLAQQVEQVRRSGRDPGQVPADAHQGFMDAAAKRVLVGLLVGEVARRNELRLESRRVSDTLRLIASTYEEPEQVIEMYRNDPQLMNGLQSRVMEEQVIDWIAERAQHTEQSLSFQDAIRV.

The 86-residue stretch at 157-242 (GDLVALETWS…AVEVSEPVLP (86 aa)) folds into the PPIase FKBP-type domain.

It belongs to the FKBP-type PPIase family. Tig subfamily.

Its subcellular location is the cytoplasm. The enzyme catalyses [protein]-peptidylproline (omega=180) = [protein]-peptidylproline (omega=0). In terms of biological role, involved in protein export. Acts as a chaperone by maintaining the newly synthesized protein in an open conformation. Functions as a peptidyl-prolyl cis-trans isomerase. The protein is Trigger factor of Xanthomonas oryzae pv. oryzae (strain PXO99A).